Reading from the N-terminus, the 641-residue chain is Chaperone protein DnaK (641 aa).

A Phosphothreonine; by autocatalysis modification is found at T201. Residues 604–622 (ASAEQGGAAPGADAGNAGK) show a composition bias toward low complexity. The segment at 604-625 (ASAEQGGAAPGADAGNAGKAQD) is disordered.

Belongs to the heat shock protein 70 family.

Acts as a chaperone. The polypeptide is Chaperone protein DnaK (Stenotrophomonas maltophilia (strain R551-3)).